The chain runs to 292 residues: T-box transcription factor tbx-9 (292 aa).

Residues 10-194 constitute a DNA-binding region (T-box); it reads GSQETLWKIF…HNSFAKGFRD (185 aa). 2 disordered regions span residues 192-227 and 265-292; these read FRDG…EVAP and STPS…DIVG. 2 stretches are compositionally biased toward low complexity: residues 204–223 and 265–275; these read PSYS…RSPP and STPSSSSSELS. Over residues 280-292 the composition is skewed to acidic residues; it reads EDQEVEEDIDIVG.

The protein localises to the nucleus. In terms of biological role, transcription factor. Involved in the control of early morphogenesis of the intestine, hypodermis and body-wall muscle. Involved in regulating expression of vab-7. Appears to have partially redundant function to tbx-8. Positively modulates expression of homeobox protein lin-39, perhaps by binding to regulatory regions of the lin-39 gene, acting in the vulval lineage. This chain is T-box transcription factor tbx-9 (tbx-9), found in Caenorhabditis elegans.